A 342-amino-acid chain; its full sequence is Aspartate carbamoyltransferase catalytic subunit (342 aa).

Arg54 and Thr55 together coordinate carbamoyl phosphate. Lys82 is an L-aspartate binding site. Carbamoyl phosphate-binding residues include Arg104, His134, and Gln137. L-aspartate is bound by residues Arg177 and Arg232. Positions 277 and 278 each coordinate carbamoyl phosphate.

Belongs to the aspartate/ornithine carbamoyltransferase superfamily. ATCase family. As to quaternary structure, heterododecamer (2C3:3R2) of six catalytic PyrB chains organized as two trimers (C3), and six regulatory PyrI chains organized as three dimers (R2).

It carries out the reaction carbamoyl phosphate + L-aspartate = N-carbamoyl-L-aspartate + phosphate + H(+). Its pathway is pyrimidine metabolism; UMP biosynthesis via de novo pathway; (S)-dihydroorotate from bicarbonate: step 2/3. Catalyzes the condensation of carbamoyl phosphate and aspartate to form carbamoyl aspartate and inorganic phosphate, the committed step in the de novo pyrimidine nucleotide biosynthesis pathway. The protein is Aspartate carbamoyltransferase catalytic subunit of Pseudarthrobacter chlorophenolicus (strain ATCC 700700 / DSM 12829 / CIP 107037 / JCM 12360 / KCTC 9906 / NCIMB 13794 / A6) (Arthrobacter chlorophenolicus).